Consider the following 165-residue polypeptide: MTSSDPQSHNVFVYGSILEPAVAAVILDRTADTVPAVLHGYHRYKLKGLPYPCIVSSDSGKVNGKVITGVSDAELNNFDVIEGNDYERVTVEVVRMDNSEKVKVETYVWVNKDDPRMYGEWDFEEWRVVHAEKFVETFRKMLEWNKNPNGKSMEEAVGSLLSSGD.

14 to 19 (YGSILE) serves as a coordination point for substrate. Catalysis depends on Glu82, which acts as the Proton acceptor.

This sequence belongs to the gamma-glutamylcyclotransferase family. In terms of tissue distribution, expressed in floral organs, leaves, stems and roots.

Functionally, putative gamma-glutamylcyclotransferase. This is Protein AIG2 C from Arabidopsis thaliana (Mouse-ear cress).